Here is a 356-residue protein sequence, read N- to C-terminus: NF-kappa-B inhibitor beta (356 aa).

Phosphoserine; by RPS6KA1 is present on residues Ser19 and Ser23. 3 ANK repeats span residues 57-86 (DGDTALHLAVIHQHEPFLDFLLGFSAGTEY), 93-122 (LGQTALHLAAILGETSTVEKLYAAGAGLCV), and 126-155 (RGHTALHLACRVGAHACARALLQPRPRRPR). The tract at residues 149 to 193 (PRPRRPREAPDTYLAQGPDRTPDTNHTPVALYPDSDLEKEEEESE) is disordered. Position 183 is a phosphoserine (Ser183). Over residues 183–193 (SDLEKEEEESE) the composition is skewed to acidic residues. ANK repeat units follow at residues 206-235 (EGHTPLHVAVIHKDVEMVRLLRDAGADLDK), 240-269 (CGRSPLHLAVEAQAADVLELLLRAGANPAA), and 273-302 (GGRTPLGSAMLRPNPILARLLRAHGAPEPE). Positions 298-356 (APEPEGEDEKSGPCSSSSDSDSGDEGDEYDDIVVHSSRSQTRLPPTPASKPLPDDPRPV) are disordered. A phosphoserine; by CK2 mark is found at Ser313 and Ser315. Over residues 318–328 (DSGDEGDEYDD) the composition is skewed to acidic residues.

It belongs to the NF-kappa-B inhibitor family. Interacts with THRB (via ligand-binding domain). Interacts with RELA and REL. Interacts with COMMD1. Interacts with inhibitor kappa B-interacting Ras-like NKIRAS1 and NKIRAS2. Phosphorylated by RPS6KA1; followed by degradation. Interaction with NKIRAS1 and NKIRAS2 probably prevents phosphorylation. Expressed in all tissues examined.

It is found in the cytoplasm. It localises to the nucleus. Its function is as follows. Inhibits NF-kappa-B by complexing with and trapping it in the cytoplasm. However, the unphosphorylated form resynthesized after cell stimulation is able to bind NF-kappa-B allowing its transport to the nucleus and protecting it to further NFKBIA-dependent inactivation. Association with inhibitor kappa B-interacting NKIRAS1 and NKIRAS2 prevent its phosphorylation rendering it more resistant to degradation, explaining its slower degradation. The protein is NF-kappa-B inhibitor beta (NFKBIB) of Homo sapiens (Human).